The following is a 435-amino-acid chain: Prenyltransferase nanD (435 aa).

Substrate is bound at residue E101. Residues R114, K202, and Y204 each coordinate dimethylallyl diphosphate. Residue Y206 participates in substrate binding. Residues K280, Y282, Y364, Y429, and Y433 each contribute to the dimethylallyl diphosphate site.

This sequence belongs to the tryptophan dimethylallyltransferase family.

It participates in secondary metabolite biosynthesis. Prenyltransferase; part of the gene cluster that mediates the biosynthesis of the benzazepine alkaloid nanangelenin A which contains an unprecedented 3,4-dihydro-1-benzazepine-2,5-dione-N-prenyl-N-acetoxy-anthranilamide scaffold. The first step of nanangelenin biosynthesis is catalyzed by the indoleamine 2,3-dioxygenase nanC which produces N-formyl-kynurenine through the catabolism of tryptophan. The two-module NRPS nanA then utilizes anthranilate (Ant) and L-kynurenine (L-Kyn) to assemble the dipeptide product nanangelenin B. The first adenylation domain of nanA (A1) loads anthranilate onto the T1 domain, while A2 loads kynurenine, generated through spontaneous nonenzymatic deformylation of the nanC-supplied N-formyl-kynurenine. The peptide bond formation between the tethered amino acids is catalyzed by the first condensation domain (C1) between anthranilate's carbonyl carbon and kynurenine's aliphatic primary amine. The second C domain (C2) catalyzes the final cyclization event between the aromatic amine of kynurenine and the tethered carbonyl carbon, yielding nanangelenin B. The terminal T3 domain enhances the catalytic efficiency of C2, suggesting the T2-tethered Ant-L-Kyn is transferred to T3 prior to cyclization by C2. Once released from nanA, nanangelenin B is then prenylated by the prenyltransferase nanD to form nanangelenin C. Nanangelenin C is then N-hydroxylated by the FAD-dependent monooxygenase nanF and further acetylated by the acetyltransferase nanB to yield nanangelenin F. Finally, the N-methyltransferase nanE methylates the amide nitrogen of 1-benzazepine to convert nanangelenin F into nanangelenin A. NanE is also able to methylate most of the intermediates of the pathway such as nanangelenin B and nanangelenin C to produce nanangelenin D and nanangelenin E, respectively. In Aspergillus nanangensis, this protein is Prenyltransferase nanD.